We begin with the raw amino-acid sequence, 158 residues long: NAD(P)H-quinone oxidoreductase subunit J, chloroplastic (158 aa).

The protein belongs to the complex I 30 kDa subunit family. NDH is composed of at least 16 different subunits, 5 of which are encoded in the nucleus.

It is found in the plastid. The protein resides in the chloroplast thylakoid membrane. It carries out the reaction a plastoquinone + NADH + (n+1) H(+)(in) = a plastoquinol + NAD(+) + n H(+)(out). The catalysed reaction is a plastoquinone + NADPH + (n+1) H(+)(in) = a plastoquinol + NADP(+) + n H(+)(out). Functionally, NDH shuttles electrons from NAD(P)H:plastoquinone, via FMN and iron-sulfur (Fe-S) centers, to quinones in the photosynthetic chain and possibly in a chloroplast respiratory chain. The immediate electron acceptor for the enzyme in this species is believed to be plastoquinone. Couples the redox reaction to proton translocation, and thus conserves the redox energy in a proton gradient. This Lupinus luteus (European yellow lupine) protein is NAD(P)H-quinone oxidoreductase subunit J, chloroplastic.